We begin with the raw amino-acid sequence, 455 residues long: Bifunctional protein GlmU (455 aa).

The pyrophosphorylase stretch occupies residues M1 to R227. UDP-N-acetyl-alpha-D-glucosamine-binding positions include L8–G11, K22, Q73, G78–T79, Y100–D102, G137, E152, N167, and N225. D102 provides a ligand contact to Mg(2+). Residue N225 coordinates Mg(2+). Positions W228–A248 are linker. Residues G249–E455 form an N-acetyltransferase region. R332 and K350 together coordinate UDP-N-acetyl-alpha-D-glucosamine. Catalysis depends on H362, which acts as the Proton acceptor. UDP-N-acetyl-alpha-D-glucosamine is bound by residues Y365 and N376. Acetyl-CoA-binding positions include A379, N385–Y386, S404, A422, and R439.

It in the N-terminal section; belongs to the N-acetylglucosamine-1-phosphate uridyltransferase family. This sequence in the C-terminal section; belongs to the transferase hexapeptide repeat family. As to quaternary structure, homotrimer. It depends on Mg(2+) as a cofactor.

The protein localises to the cytoplasm. The catalysed reaction is alpha-D-glucosamine 1-phosphate + acetyl-CoA = N-acetyl-alpha-D-glucosamine 1-phosphate + CoA + H(+). It carries out the reaction N-acetyl-alpha-D-glucosamine 1-phosphate + UTP + H(+) = UDP-N-acetyl-alpha-D-glucosamine + diphosphate. It participates in nucleotide-sugar biosynthesis; UDP-N-acetyl-alpha-D-glucosamine biosynthesis; N-acetyl-alpha-D-glucosamine 1-phosphate from alpha-D-glucosamine 6-phosphate (route II): step 2/2. It functions in the pathway nucleotide-sugar biosynthesis; UDP-N-acetyl-alpha-D-glucosamine biosynthesis; UDP-N-acetyl-alpha-D-glucosamine from N-acetyl-alpha-D-glucosamine 1-phosphate: step 1/1. Its pathway is bacterial outer membrane biogenesis; LPS lipid A biosynthesis. Its function is as follows. Catalyzes the last two sequential reactions in the de novo biosynthetic pathway for UDP-N-acetylglucosamine (UDP-GlcNAc). The C-terminal domain catalyzes the transfer of acetyl group from acetyl coenzyme A to glucosamine-1-phosphate (GlcN-1-P) to produce N-acetylglucosamine-1-phosphate (GlcNAc-1-P), which is converted into UDP-GlcNAc by the transfer of uridine 5-monophosphate (from uridine 5-triphosphate), a reaction catalyzed by the N-terminal domain. This chain is Bifunctional protein GlmU, found in Coxiella burnetii (strain Dugway 5J108-111).